Reading from the N-terminus, the 339-residue chain is Dihydroorotate dehydrogenase (quinone) (339 aa).

FMN contacts are provided by residues 62 to 66 and T86; that span reads AGMDK. Residue K66 participates in substrate binding. 111–115 contacts substrate; the sequence is NRMGF. FMN contacts are provided by N139 and N172. Residue N172 coordinates substrate. The active-site Nucleophile is S175. N177 contacts substrate. The FMN site is built by K217 and T245. 246–247 is a binding site for substrate; sequence NT. FMN is bound by residues G268, G297, and 318-319; that span reads YS.

The protein belongs to the dihydroorotate dehydrogenase family. Type 2 subfamily. Monomer. It depends on FMN as a cofactor.

It localises to the cell membrane. The enzyme catalyses (S)-dihydroorotate + a quinone = orotate + a quinol. The protein operates within pyrimidine metabolism; UMP biosynthesis via de novo pathway; orotate from (S)-dihydroorotate (quinone route): step 1/1. Functionally, catalyzes the conversion of dihydroorotate to orotate with quinone as electron acceptor. This chain is Dihydroorotate dehydrogenase (quinone), found in Shewanella baltica (strain OS185).